The chain runs to 551 residues: Eukaryotic translation initiation factor 3 subunit D-2 (551 aa).

The tract at residues 105–152 is disordered; the sequence is NNVRARGRTGRGSQAVGGPGGPAAGGSTANSTKYGKGRNTRNTQNVGR. A compositionally biased stretch (gly residues) spans 119-128; sequence AVGGPGGPAA. An RNA gate region spans residues 290–304; sequence QFDLLTVNETSLEPP.

It belongs to the eIF-3 subunit D family. In terms of assembly, component of the eukaryotic translation initiation factor 3 (eIF-3) complex. The eIF-3 complex interacts with pix.

Its subcellular location is the cytoplasm. Functionally, mRNA cap-binding component of the eukaryotic translation initiation factor 3 (eIF-3) complex, which is involved in protein synthesis of a specialized repertoire of mRNAs and, together with other initiation factors, stimulates binding of mRNA and methionyl-tRNAi to the 40S ribosome. The eIF-3 complex specifically targets and initiates translation of a subset of mRNAs involved in cell proliferation. In the eIF-3 complex, eif3d specifically recognizes and binds the 7-methylguanosine cap of a subset of mRNAs. The polypeptide is Eukaryotic translation initiation factor 3 subunit D-2 (Drosophila erecta (Fruit fly)).